The chain runs to 185 residues: Peptidyl-tRNA hydrolase (185 aa).

Position 14 (Tyr-14) interacts with tRNA. The Proton acceptor role is filled by His-19. Residues Tyr-64, Asn-66, and Asn-112 each coordinate tRNA.

The protein belongs to the PTH family. In terms of assembly, monomer.

It localises to the cytoplasm. The enzyme catalyses an N-acyl-L-alpha-aminoacyl-tRNA + H2O = an N-acyl-L-amino acid + a tRNA + H(+). Its function is as follows. Hydrolyzes ribosome-free peptidyl-tRNAs (with 1 or more amino acids incorporated), which drop off the ribosome during protein synthesis, or as a result of ribosome stalling. In terms of biological role, catalyzes the release of premature peptidyl moieties from peptidyl-tRNA molecules trapped in stalled 50S ribosomal subunits, and thus maintains levels of free tRNAs and 50S ribosomes. This Exiguobacterium sibiricum (strain DSM 17290 / CCUG 55495 / CIP 109462 / JCM 13490 / 255-15) protein is Peptidyl-tRNA hydrolase.